A 325-amino-acid polypeptide reads, in one-letter code: Chain length determinant protein (325 aa).

The Cytoplasmic portion of the chain corresponds to 1–31 (MRVENNNVSGQNLDPEQIDLIDLLVQLWRGK). Residues 32-52 (MTIIISVIVAIVLAIGYLVVA) traverse the membrane as a helical segment. Residues 53–294 (KEKWTSTAIV…LPIRRDSPKK (242 aa)) are Periplasmic-facing. The helical transmembrane segment at 295–315 (AITLILAVLLGGMVGAGIVLG) threads the bilayer. Residues 316 to 325 (RNALRNYNAK) are Cytoplasmic-facing.

Belongs to the WzzB/Cld/Rol family.

The protein localises to the cell inner membrane. Its pathway is bacterial outer membrane biogenesis; lipopolysaccharide biosynthesis. Its function is as follows. Confers a modal distribution of chain length on the O-antigen component of lipopolysaccharide (LPS). Gives rise to a reduced number of short chain molecules and increases in numbers of longer molecules, with a modal value of 13 (in strain O111/M92) and of 17 (in strain K12). The polypeptide is Chain length determinant protein (wzzB) (Escherichia coli).